A 159-amino-acid chain; its full sequence is Ribosomal RNA large subunit methyltransferase H (159 aa).

2 residues coordinate S-adenosyl-L-methionine: L76 and G108.

The protein belongs to the RNA methyltransferase RlmH family. In terms of assembly, homodimer.

Its subcellular location is the cytoplasm. It catalyses the reaction pseudouridine(1915) in 23S rRNA + S-adenosyl-L-methionine = N(3)-methylpseudouridine(1915) in 23S rRNA + S-adenosyl-L-homocysteine + H(+). Its function is as follows. Specifically methylates the pseudouridine at position 1915 (m3Psi1915) in 23S rRNA. The polypeptide is Ribosomal RNA large subunit methyltransferase H (Finegoldia magna (strain ATCC 29328 / DSM 20472 / WAL 2508) (Peptostreptococcus magnus)).